A 495-amino-acid chain; its full sequence is Leucine aminopeptidase 2 (495 aa).

An N-terminal signal peptide occupies residues 1–21; it reads MKSQLLSLAVAVTTISQGVVG. The PA domain maps to 124–218; the sequence is PPASKIMAEL…EDGKNLATLV (95 aa). 2 N-linked (GlcNAc...) asparagine glycosylation sites follow: asparagine 142 and asparagine 235. Residues histidine 259 and aspartate 271 each coordinate Zn(2+). N-linked (GlcNAc...) asparagine glycosylation occurs at asparagine 272. Glutamate 303 acts as the Proton acceptor in catalysis. Zn(2+)-binding residues include glutamate 304 and aspartate 332. The N-linked (GlcNAc...) asparagine glycan is linked to asparagine 352. Histidine 430 lines the Zn(2+) pocket.

The protein belongs to the peptidase M28 family. M28A subfamily. As to quaternary structure, monomer. Requires Zn(2+) as cofactor.

It is found in the secreted. With respect to regulation, activity is inhibited by EDTA, o-phenanthroline, bestatin and amastatin. Functionally, extracellular aminopeptidase that releases a wide variety of amino acids from natural peptides and contributes to pathogenicity. The polypeptide is Leucine aminopeptidase 2 (LAP2) (Trichophyton rubrum (Athlete's foot fungus)).